The following is a 764-amino-acid chain: MSKAKDTGILRFDDTPLAATFPLVAIITSKVVGGVKIVGRKGLDSTEFSIVGTQDSLKGSYVIAKYLARTTPSLSLYGENALSASKIDEFIDKFAHLKSEKFNEFLKEMNEYLTLRAFLIGFNLTLADIVLFARIKMVKEIQEEINKLGKTIPHLNRWYGYLSQLESFVEADNAFNGKKETKASGKAGAEGTAATTEKVAPQKGAMGWVGNFEALNLPGLVEGKVVTRFPPEPSGYMHIGHCKAAIINNYYAEKYNGKIIIRFDDTNPSKEKEEYVENIIKDINNLGIKYEKITHTSDYFDLIHDYAIQMIKEGIAYCDDTPQVKMSEERDNAIESVHRNNSVEKNLEMFDEMKKATEQGVKCVLRAKLDMAHIDKAFRDPAIYRCNSTPHHRTGDKYKVYPLYDFACPIVDSVEGITHALRSNEYNNKRNLYNHYLEILHLENKPYISDYSRLSFFNVLLSKRKLQHFVDTGLVSGWTDPRLPTLQGITRRGLTVAALKEFILSQGASAANTTLDLGKLFVGNKAVLEPTCPRYTAIAKATAVKFTLSNGPTLPEVKDCLKYAKDPSMGTKKVTFSNNLLLEGDDCNQIKEGEEVTLMNWGNAIVETLQRNENGDVVSMTGKLHLEGDVKKTDKKLSWLSSDCADTVTVVLQDYDYIITKPKLEDGDDLDTFTNKNSKFEIEAFTDENILTLKLNDKIQFERRGFFNVDQVGDGVKPYILIYIPSGPIKPAGAALYPFKKVEKVAAPVNPKPTAKKQEKQSKK.

Residue 228–230 (RFP) coordinates L-glutamate. Positions 233 to 242 (PSGYMHIGHC) match the 'HIGH' region motif. Histidine 238 is an ATP binding site. L-glutamate is bound by residues aspartate 264, 404 to 408 (YDFAC), and arginine 422. ATP-binding positions include glutamate 425 and 460–464 (LLSKR). The 'KMSKS' region signature appears at 460 to 464 (LLSKR).

Belongs to the class-I aminoacyl-tRNA synthetase family. Glutamate--tRNA ligase type 2 subfamily.

The protein localises to the cytoplasm. The catalysed reaction is tRNA(Glu) + L-glutamate + ATP = L-glutamyl-tRNA(Glu) + AMP + diphosphate. Its function is as follows. Catalyzes the attachment of glutamate to tRNA(Glu) in a two-step reaction: glutamate is first activated by ATP to form Glu-AMP and then transferred to the acceptor end of tRNA(Glu). In Dictyostelium discoideum (Social amoeba), this protein is Probable glutamate--tRNA ligase, cytoplasmic (gluS).